The following is a 271-amino-acid chain: Glutamate racemase (271 aa).

Substrate contacts are provided by residues 10 to 11 (DS) and 42 to 43 (YG). C73 (proton donor/acceptor) is an active-site residue. Substrate is bound at residue 74–75 (NT). C183 functions as the Proton donor/acceptor in the catalytic mechanism. 184–185 (TH) contributes to the substrate binding site.

Belongs to the aspartate/glutamate racemases family.

It catalyses the reaction L-glutamate = D-glutamate. Its pathway is cell wall biogenesis; peptidoglycan biosynthesis. Provides the (R)-glutamate required for cell wall biosynthesis. This chain is Glutamate racemase, found in Streptococcus thermophilus (strain CNRZ 1066).